The primary structure comprises 411 residues: ATP-dependent Clp protease ATP-binding subunit ClpX (411 aa).

The ClpX-type ZB domain occupies 1–51 (MAKKKDEEYCSFCGMPRTQVNLMLEGVHAHICDECALRAGEVVREALQKFK). Zn(2+)-binding residues include Cys10, Cys13, Cys32, and Cys35. 119–126 (PTGTGKTL) contributes to the ATP binding site.

The protein belongs to the ClpX chaperone family. Component of the ClpX-ClpP complex. Forms a hexameric ring that, in the presence of ATP, binds to fourteen ClpP subunits assembled into a disk-like structure with a central cavity, resembling the structure of eukaryotic proteasomes.

In terms of biological role, ATP-dependent specificity component of the Clp protease. It directs the protease to specific substrates. Can perform chaperone functions in the absence of ClpP. The polypeptide is ATP-dependent Clp protease ATP-binding subunit ClpX (Porphyromonas gingivalis (strain ATCC 33277 / DSM 20709 / CIP 103683 / JCM 12257 / NCTC 11834 / 2561)).